We begin with the raw amino-acid sequence, 120 residues long: Ribonuclease P protein component (120 aa).

It belongs to the RnpA family. As to quaternary structure, consists of a catalytic RNA component (M1 or rnpB) and a protein subunit.

It carries out the reaction Endonucleolytic cleavage of RNA, removing 5'-extranucleotides from tRNA precursor.. RNaseP catalyzes the removal of the 5'-leader sequence from pre-tRNA to produce the mature 5'-terminus. It can also cleave other RNA substrates such as 4.5S RNA. The protein component plays an auxiliary but essential role in vivo by binding to the 5'-leader sequence and broadening the substrate specificity of the ribozyme. The polypeptide is Ribonuclease P protein component (Chlamydia trachomatis serovar A (strain ATCC VR-571B / DSM 19440 / HAR-13)).